A 157-amino-acid polypeptide reads, in one-letter code: DNA gyrase inhibitor (157 aa).

It belongs to the DNA gyrase inhibitor family. Interacts with DNA gyrase.

The protein resides in the cytoplasm. Its function is as follows. Inhibits the supercoiling activity of DNA gyrase. Acts by inhibiting DNA gyrase at an early step, prior to (or at the step of) binding of DNA by the gyrase. It protects cells against toxins that target DNA gyrase, by inhibiting activity of these toxins and reducing the formation of lethal double-strand breaks in the cell. In Cronobacter sakazakii (strain ATCC BAA-894) (Enterobacter sakazakii), this protein is DNA gyrase inhibitor.